We begin with the raw amino-acid sequence, 152 residues long: Small ribosomal subunit protein uS13 (152 aa).

Positions 133–152 (GQHTKTTGRRGRTVGVSKKK) are disordered.

This sequence belongs to the universal ribosomal protein uS13 family.

The protein localises to the cytoplasm. Located at the top of the head of the 40S subunit, it contacts several helices of the 18S rRNA. This is Small ribosomal subunit protein uS13 (RpS18) from Spodoptera frugiperda (Fall armyworm).